A 378-amino-acid polypeptide reads, in one-letter code: Chaperone protein DnaJ (378 aa).

In terms of domain architecture, J spans 3–67 (DFYDTLGVNR…EKRARYDQFG (65 aa)). A CR-type zinc finger spans residues 132 to 214 (GQEREIKIPH…CGGQGVKQVR (83 aa)). Residues cysteine 145, cysteine 148, cysteine 162, cysteine 165, cysteine 188, cysteine 191, cysteine 202, and cysteine 205 each contribute to the Zn(2+) site. CXXCXGXG motif repeat units follow at residues 145–152 (CDVCRGTG), 162–169 (CSTCGGAG), 188–195 (CPTCSGSG), and 202–209 (CQSCGGQG).

This sequence belongs to the DnaJ family. In terms of assembly, homodimer. Zn(2+) serves as cofactor.

Its subcellular location is the cytoplasm. In terms of biological role, participates actively in the response to hyperosmotic and heat shock by preventing the aggregation of stress-denatured proteins and by disaggregating proteins, also in an autonomous, DnaK-independent fashion. Unfolded proteins bind initially to DnaJ; upon interaction with the DnaJ-bound protein, DnaK hydrolyzes its bound ATP, resulting in the formation of a stable complex. GrpE releases ADP from DnaK; ATP binding to DnaK triggers the release of the substrate protein, thus completing the reaction cycle. Several rounds of ATP-dependent interactions between DnaJ, DnaK and GrpE are required for fully efficient folding. Also involved, together with DnaK and GrpE, in the DNA replication of plasmids through activation of initiation proteins. The polypeptide is Chaperone protein DnaJ (Prochlorococcus marinus (strain SARG / CCMP1375 / SS120)).